The following is a 290-amino-acid chain: Tubulin beta-4B chain (290 aa).

Positions 1–4 match the MREI motif motif; sequence MREI. Residue Gln11 participates in GTP binding. Thr55 is subject to Phosphothreonine. At Lys58 the chain carries N6-acetyllysine. Residues Glu69, Ser138, Gly142, Thr143, Gly144, and Asn172 each coordinate GTP. A Mg(2+)-binding site is contributed by Glu69.

The protein belongs to the tubulin family. As to quaternary structure, dimer of alpha and beta chains. A typical microtubule is a hollow water-filled tube with an outer diameter of 25 nm and an inner diameter of 15 nM. Alpha-beta heterodimers associate head-to-tail to form protofilaments running lengthwise along the microtubule wall with the beta-tubulin subunit facing the microtubule plus end conferring a structural polarity. Microtubules usually have 13 protofilaments but different protofilament numbers can be found in some organisms and specialized cells. Component of sperm flagellar doublet microtubules. It depends on Mg(2+) as a cofactor. In terms of processing, some glutamate residues at the C-terminus are polyglycylated, resulting in polyglycine chains on the gamma-carboxyl group. Glycylation is mainly limited to tubulin incorporated into axonemes (cilia and flagella) whereas glutamylation is prevalent in neuronal cells, centrioles, axonemes, and the mitotic spindle. Both modifications can coexist on the same protein on adjacent residues, and lowering polyglycylation levels increases polyglutamylation, and reciprocally. Cilia and flagella glycylation is required for their stability and maintenance. Flagella glycylation controls sperm motility. Post-translationally, some glutamate residues at the C-terminus are polyglutamylated, resulting in polyglutamate chains on the gamma-carboxyl group. Polyglutamylation plays a key role in microtubule severing by spastin (SPAST). SPAST preferentially recognizes and acts on microtubules decorated with short polyglutamate tails: severing activity by SPAST increases as the number of glutamates per tubulin rises from one to eight, but decreases beyond this glutamylation threshold. Glutamylation is also involved in cilia motility.

The protein resides in the cytoplasm. The protein localises to the cytoskeleton. It localises to the flagellum axoneme. Its function is as follows. Tubulin is the major constituent of microtubules, a cylinder consisting of laterally associated linear protofilaments composed of alpha- and beta-tubulin heterodimers. Microtubules grow by the addition of GTP-tubulin dimers to the microtubule end, where a stabilizing cap forms. Below the cap, tubulin dimers are in GDP-bound state, owing to GTPase activity of alpha-tubulin. The chain is Tubulin beta-4B chain (TUBB4B) from Mesocricetus auratus (Golden hamster).